A 327-amino-acid chain; its full sequence is Ferrochelatase (327 aa).

H196 and E277 together coordinate Fe cation.

This sequence belongs to the ferrochelatase family.

It is found in the cytoplasm. It catalyses the reaction heme b + 2 H(+) = protoporphyrin IX + Fe(2+). It functions in the pathway porphyrin-containing compound metabolism; protoheme biosynthesis; protoheme from protoporphyrin-IX: step 1/1. Catalyzes the ferrous insertion into protoporphyrin IX. The chain is Ferrochelatase from Gloeobacter violaceus (strain ATCC 29082 / PCC 7421).